A 408-amino-acid chain; its full sequence is Arginine biosynthesis bifunctional protein ArgJ 1 (408 aa).

Residues T154, K180, T191, E277, N403, and S408 each coordinate substrate. The active-site Nucleophile is T191.

Belongs to the ArgJ family. As to quaternary structure, heterotetramer of two alpha and two beta chains.

Its subcellular location is the cytoplasm. The enzyme catalyses N(2)-acetyl-L-ornithine + L-glutamate = N-acetyl-L-glutamate + L-ornithine. It carries out the reaction L-glutamate + acetyl-CoA = N-acetyl-L-glutamate + CoA + H(+). It participates in amino-acid biosynthesis; L-arginine biosynthesis; L-ornithine and N-acetyl-L-glutamate from L-glutamate and N(2)-acetyl-L-ornithine (cyclic): step 1/1. It functions in the pathway amino-acid biosynthesis; L-arginine biosynthesis; N(2)-acetyl-L-ornithine from L-glutamate: step 1/4. Functionally, catalyzes two activities which are involved in the cyclic version of arginine biosynthesis: the synthesis of N-acetylglutamate from glutamate and acetyl-CoA as the acetyl donor, and of ornithine by transacetylation between N(2)-acetylornithine and glutamate. The sequence is that of Arginine biosynthesis bifunctional protein ArgJ 1 from Clostridium acetobutylicum (strain ATCC 824 / DSM 792 / JCM 1419 / IAM 19013 / LMG 5710 / NBRC 13948 / NRRL B-527 / VKM B-1787 / 2291 / W).